The following is a 551-amino-acid chain: Cilia- and flagella-associated protein 45 (551 aa).

2 disordered regions span residues 1–30 and 461–489; these read MPLS…TKAV and RLEE…QQKE. Residues 157–526 are a coiled coil; it reads NNNKKLSDLE…IKRKKLEELR (370 aa).

This sequence belongs to the CFAP45 family. As to quaternary structure, microtubule inner protein component of sperm flagellar doublet microtubules. Interacts with AK8; dimerization with AK8 may create a cavity at the interface of the dimer that can accommodate AMP. Interacts with CFAP52. Interacts with ENKUR. Directly interacts with DNALI1. Interacts with DNAH11. Interacts with DNAI1. In terms of tissue distribution, expressed in respiratory cells and in sperm (at protein level). Expressed in nasopharyngeal epithelium and trachea.

It is found in the cytoplasm. It localises to the cytoskeleton. Its subcellular location is the cilium axoneme. The protein resides in the flagellum axoneme. The protein localises to the cell projection. It is found in the cilium. It localises to the flagellum. Its function is as follows. Microtubule inner protein (MIP) part of the dynein-decorated doublet microtubules (DMTs) in cilia axoneme, which is required for motile cilia beating. It is an AMP-binding protein that may facilitate dynein ATPase-dependent ciliary and flagellar beating via adenine nucleotide homeostasis. May function as a donor of AMP to AK8 and hence promote ADP production. This chain is Cilia- and flagella-associated protein 45, found in Homo sapiens (Human).